Reading from the N-terminus, the 307-residue chain is MNIILFTSLVAFFVFLLILKYWINFQKSKGIGKYIRKEGPSSHFQKSGTPVMGGIIFLIVSIPFLFFKETFFPSLSTILFGLLGLLDDFKLMVNKDYGIRPLRKIFLSFIITLLLYIFSFHDYKIYWGSKLIISSRIFYVILFFVVFIAVPNAINLTDGLDGLAGGTSLITLFFFLIYNFQFNNELTLEISLMITALIAFLWFNSHPAEIFMGDVGAFALGGFIASLSIINKVELLLVFLGGIFLIESLSVFIQVFFYKWKKRRVFLMSPLHHHFELKGWKETKVVWRFYIIHLIMMIGGIILWNLT.

A run of 10 helical transmembrane segments spans residues 3–23 (IILF…KYWI), 47–67 (SGTP…FLFF), 71–91 (FFPS…DFKL), 105–125 (IFLS…DYKI), 137–157 (IFYV…INLT), 162–182 (GLAG…NFQF), 186–206 (LTLE…FNSH), 210–230 (IFMG…LSII), 237–257 (LVFL…QVFF), and 285–305 (VVWR…ILWN).

Belongs to the glycosyltransferase 4 family. MraY subfamily. The cofactor is Mg(2+).

It localises to the cell inner membrane. It carries out the reaction UDP-N-acetyl-alpha-D-muramoyl-L-alanyl-gamma-D-glutamyl-meso-2,6-diaminopimeloyl-D-alanyl-D-alanine + di-trans,octa-cis-undecaprenyl phosphate = di-trans,octa-cis-undecaprenyl diphospho-N-acetyl-alpha-D-muramoyl-L-alanyl-D-glutamyl-meso-2,6-diaminopimeloyl-D-alanyl-D-alanine + UMP. Its pathway is cell wall biogenesis; peptidoglycan biosynthesis. Catalyzes the initial step of the lipid cycle reactions in the biosynthesis of the cell wall peptidoglycan: transfers peptidoglycan precursor phospho-MurNAc-pentapeptide from UDP-MurNAc-pentapeptide onto the lipid carrier undecaprenyl phosphate, yielding undecaprenyl-pyrophosphoryl-MurNAc-pentapeptide, known as lipid I. The protein is Phospho-N-acetylmuramoyl-pentapeptide-transferase of Dictyoglomus turgidum (strain DSM 6724 / Z-1310).